The primary structure comprises 296 residues: MSNYVNDMWPGSPQEKDSPSASRSGGSSRLSSRSRSRSFSRSSRSRSRVSSRFSSRSRSRSRRSRSRSRSRRRHQRKYRRYSRSYSRSRSRSRSRRYRERRYGFSRRYYRSPSRSRSRSRSRSRSRSRERSYYGRAYAMARGRRYYGFGRTVYPEERSRWRDRSRTRSRSRTPFRLSEKDRMELLEIAKANAAKALGTTNIDLPASLRTVHVAKETSHGIGVSSNGAKPELSENVTEDGPRNPSEKPSQQRSIAFSSNNSVAKPIQKSAKAATEETSSRSPKIDKKKSPYGLWIPV.

Positions 1–131 (MSNYVNDMWP…RSRSRSRERS (131 aa)) are disordered. Serine 12 is subject to Phosphoserine. A compositionally biased stretch (low complexity) spans 20–31 (SASRSGGSSRLS). Positions 32-125 (SRSRSRSFSR…RSRSRSRSRS (94 aa)) are enriched in basic residues. Phosphoserine is present on residues serine 111 and serine 113. Residue arginine 141 is modified to Omega-N-methylarginine. Basic and acidic residues predominate over residues 156–165 (ERSRWRDRSR). Disordered regions lie at residues 156 to 175 (ERSR…TPFR) and 217 to 296 (SHGI…WIPV). A compositionally biased stretch (polar residues) spans 245–261 (EKPSQQRSIAFSSNNSV). The segment covering 272-287 (ATEETSSRSPKIDKKK) has biased composition (basic and acidic residues). Position 280 is a phosphoserine (serine 280).

This sequence belongs to the RSRP family. Phosphorylated. Phosphorylation at Ser-111 and Ser-113 mediates the interaction with spliceosome proteins.

It is found in the nucleus. Its function is as follows. Probably acts as a spliceosomal factor that contributes to spliceosome assembly and regulates the isoform switching of proteins such as PARP6. The chain is Arginine/serine-rich protein 1 (RSRP1) from Macaca fascicularis (Crab-eating macaque).